A 156-amino-acid chain; its full sequence is Organelle RRM domain-containing protein 2, mitochondrial (156 aa).

The N-terminal 28 residues, 1–28, are a transit peptide targeting the mitochondrion; it reads MAMAMRLPAISRAVTEVASAPVGLRRLF. The region spanning 56–134 is the RRM domain; sequence TNLFVSGLSK…WVIFAEYARP (79 aa). Ser64 bears the Phosphoserine mark. The segment covering 137 to 148 has biased composition (polar residues); sequence QSQSYQPQNNMS. Positions 137–156 are disordered; the sequence is QSQSYQPQNNMSRPPYYGNR.

Interacts with RBG3/ORRM3. Binds to RBG2/ORRM5.

The protein localises to the mitochondrion. In terms of biological role, involved in C-to-U editing of mitochondrial RNA. Functions as minor mitochondrial editing factor. Controls 6 percent of the mitochondrial editing sites. This is Organelle RRM domain-containing protein 2, mitochondrial from Arabidopsis thaliana (Mouse-ear cress).